Reading from the N-terminus, the 174-residue chain is uncharacterized protein (174 aa).

The next 2 membrane-spanning stretches (helical) occupy residues 8-28 and 146-166; these read FLFI…NYVF and IVSW…IQFI.

It localises to the cell membrane. This is an uncharacterized protein from Haemophilus influenzae (strain ATCC 51907 / DSM 11121 / KW20 / Rd).